The primary structure comprises 553 residues: Formate--tetrahydrofolate ligase (553 aa).

64–71 (TPAGEGKT) serves as a coordination point for ATP.

The protein belongs to the formate--tetrahydrofolate ligase family.

The catalysed reaction is (6S)-5,6,7,8-tetrahydrofolate + formate + ATP = (6R)-10-formyltetrahydrofolate + ADP + phosphate. Its pathway is one-carbon metabolism; tetrahydrofolate interconversion. The sequence is that of Formate--tetrahydrofolate ligase from Pseudothermotoga lettingae (strain ATCC BAA-301 / DSM 14385 / NBRC 107922 / TMO) (Thermotoga lettingae).